A 221-amino-acid chain; its full sequence is Ribonuclease T (221 aa).

In terms of domain architecture, Exonuclease spans 20–194; sequence VVIDVETAGF…YDTERTAELF (175 aa). Residues Asp-23, Glu-25, His-181, and Asp-186 each contribute to the Mg(2+) site. His-181 functions as the Proton donor/acceptor in the catalytic mechanism.

It belongs to the RNase T family. Homodimer. Requires Mg(2+) as cofactor.

Trims short 3' overhangs of a variety of RNA species, leaving a one or two nucleotide 3' overhang. Responsible for the end-turnover of tRNA: specifically removes the terminal AMP residue from uncharged tRNA (tRNA-C-C-A). Also appears to be involved in tRNA biosynthesis. This chain is Ribonuclease T, found in Shewanella frigidimarina (strain NCIMB 400).